The following is a 575-amino-acid chain: MFKRLFKKTKYITVSSHNLNEKDTTLEKPLIPDCMWSKCEKCGQIIYSKDLRKNHSICGFCKNHFRISAYDRVKQIIDEGTWAEMDKNLCSVNPLNFKGYNDKIEKAQEKTDLNEAVITGVGSIKGEKTVICIMDSRFFMGSMGSVVGEKITRSIEKSIENRLPLVIFTASGGARMQEGMFSLMQMAKISAALSKLSQAGLLYITVLTDPTTGGVTASFAMLGDIILSEPGALIGFAGKRVIEQTINKKLPKGFQTAEFLMKHGFIDKIVNRKNLKDTLSMILKLHREKCEFKSYKDITVNKVNTLKNKLDAWGKLSMARNEKRPTSLDYIDNIFENFMEFHGDRYYGNDSCIVGGIGILDGVPVTIIAQQKGRDLNENIERNFGMPNPEGYRKALRLMKQAEKFNRPIVCFIDTPGAYCGVEAEQRGQGEAIAKNLINMISLEVPIISIVIGEGGSGGALALSVSDKIWMLENAVYSLLSPEGFASILWRDSTKAKEAANIMKITSEDLKSYSLIDKILYEPDRDASKNVKVMSNIIKNNLIKEFNNLMDLDRDELLNKRYNKFRVIGEYKNKT.

The segment at 1-264 is acetyl-coenzyme A carboxylase carboxyl transferase subunit beta; the sequence is MFKRLFKKTK…QTAEFLMKHG (264 aa). Residues 35–301 enclose the CoA carboxyltransferase N-terminal domain; sequence MWSKCEKCGQ…FKSYKDITVN (267 aa). Residues 35–548 form a carboxyltransferase region; the sequence is MWSKCEKCGQ…KNNLIKEFNN (514 aa). Cysteine 39, cysteine 42, cysteine 58, and cysteine 61 together coordinate Zn(2+). A C4-type zinc finger spans residues 39 to 61; sequence CEKCGQIIYSKDLRKNHSICGFC. The tract at residues 265–571 is acetyl-coenzyme A carboxylase carboxyl transferase subunit alpha; sequence FIDKIVNRKN…YNKFRVIGEY (307 aa). The 254-residue stretch at 295-548 folds into the CoA carboxyltransferase C-terminal domain; that stretch reads YKDITVNKVN…KNNLIKEFNN (254 aa).

In the N-terminal section; belongs to the AccD/PCCB family. The protein in the C-terminal section; belongs to the AccA family. Acetyl-CoA carboxylase is a heterotetramer composed of biotin carboxyl carrier protein (AccB), biotin carboxylase (AccC) and two subunits of ACCase subunit beta/alpha. Zn(2+) serves as cofactor.

It localises to the cytoplasm. The catalysed reaction is N(6)-carboxybiotinyl-L-lysyl-[protein] + acetyl-CoA = N(6)-biotinyl-L-lysyl-[protein] + malonyl-CoA. It functions in the pathway lipid metabolism; malonyl-CoA biosynthesis; malonyl-CoA from acetyl-CoA: step 1/1. Functionally, component of the acetyl coenzyme A carboxylase (ACC) complex. Biotin carboxylase (BC) catalyzes the carboxylation of biotin on its carrier protein (BCCP) and then the CO(2) group is transferred by the transcarboxylase to acetyl-CoA to form malonyl-CoA. The chain is Acetyl-coenzyme A carboxylase carboxyl transferase subunits beta/alpha (accD) from Clostridium tetani (strain Massachusetts / E88).